A 60-amino-acid polypeptide reads, in one-letter code: TIKVPEGFDYELYNRNDINRYVDAVLTIPKVICDHLGLGVKTGLPYIWHSKASNPFVNLK.

The protein belongs to the RGP family. As to quaternary structure, homopentamer or homohexamer. Mn(2+) serves as cofactor. Mg(2+) is required as a cofactor.

It is found in the secreted. The protein resides in the cell wall. It localises to the cell junction. Its subcellular location is the plasmodesma. The protein localises to the golgi apparatus. It carries out the reaction UDP-beta-L-arabinofuranose = UDP-beta-L-arabinopyranose. Functionally, probable UDP-L-arabinose mutase involved in the biosynthesis of cell wall non-cellulosic polysaccharides. This is Probable UDP-arabinopyranose mutase 1 from Phoenix dactylifera (Date palm).